The sequence spans 575 residues: Delta-selinene-like synthase, chloroplastic (575 aa).

(2E,6E)-farnesyl diphosphate contacts are provided by arginine 288, aspartate 325, aspartate 329, arginine 466, and aspartate 469. Residues aspartate 325 and aspartate 329 each contribute to the Mg(2+) site. The DDXXD motif motif lies at 325–329 (DDLYD). Positions 469 and 477 each coordinate Mg(2+).

This sequence belongs to the terpene synthase family. Tpsb subfamily. Monomer. Mg(2+) is required as a cofactor. Requires Mn(2+) as cofactor.

It is found in the plastid. Its subcellular location is the chloroplast. It catalyses the reaction (2E,6E)-farnesyl diphosphate = (+)-delta-selinene + diphosphate. It participates in secondary metabolite biosynthesis; terpenoid biosynthesis. The protein operates within terpene metabolism; oleoresin biosynthesis. Functionally, sesquiterpene synthase (sesqui-TPS) involved in the biosynthesis of sesquiterpene natural products. Catalyzes the conversion of (2E)-geranyl diphosphate (GPP) into delta-selinene. The chain is Delta-selinene-like synthase, chloroplastic from Picea sitchensis (Sitka spruce).